A 413-amino-acid chain; its full sequence is Arginine biosynthesis bifunctional protein ArgJ (413 aa).

The substrate site is built by Thr158, Lys184, Thr195, Glu285, Asn408, and Ser413. Thr195 functions as the Nucleophile in the catalytic mechanism.

This sequence belongs to the ArgJ family. In terms of assembly, heterotetramer of two alpha and two beta chains.

Its subcellular location is the cytoplasm. It catalyses the reaction N(2)-acetyl-L-ornithine + L-glutamate = N-acetyl-L-glutamate + L-ornithine. The enzyme catalyses L-glutamate + acetyl-CoA = N-acetyl-L-glutamate + CoA + H(+). The protein operates within amino-acid biosynthesis; L-arginine biosynthesis; L-ornithine and N-acetyl-L-glutamate from L-glutamate and N(2)-acetyl-L-ornithine (cyclic): step 1/1. It participates in amino-acid biosynthesis; L-arginine biosynthesis; N(2)-acetyl-L-ornithine from L-glutamate: step 1/4. Functionally, catalyzes two activities which are involved in the cyclic version of arginine biosynthesis: the synthesis of N-acetylglutamate from glutamate and acetyl-CoA as the acetyl donor, and of ornithine by transacetylation between N(2)-acetylornithine and glutamate. This Mesorhizobium japonicum (strain LMG 29417 / CECT 9101 / MAFF 303099) (Mesorhizobium loti (strain MAFF 303099)) protein is Arginine biosynthesis bifunctional protein ArgJ.